We begin with the raw amino-acid sequence, 62 residues long: Large ribosomal subunit protein bL32 (62 aa).

Residues 1–19 show a composition bias toward basic residues; the sequence is MAVPKRKTSKTRRDKRRAS. The segment at 1–20 is disordered; it reads MAVPKRKTSKTRRDKRRASS.

The protein belongs to the bacterial ribosomal protein bL32 family.

This chain is Large ribosomal subunit protein bL32, found in Finegoldia magna (strain ATCC 29328 / DSM 20472 / WAL 2508) (Peptostreptococcus magnus).